Consider the following 31-residue polypeptide: RISSSVIAHKTQLDSGKREVYSSHMQLGGPK.

A disordered region spans residues arginine 1–lysine 31. Over residues threonine 11–tyrosine 21 the composition is skewed to basic and acidic residues.

The enzyme catalyses hydrogencarbonate + acetyl-CoA + ATP = malonyl-CoA + ADP + phosphate + H(+). It participates in lipid metabolism; malonyl-CoA biosynthesis; malonyl-CoA from acetyl-CoA: step 1/1. The sequence is that of Acetyl-CoA carboxylase from Catharanthus roseus (Madagascar periwinkle).